The primary structure comprises 144 residues: Putative pre-16S rRNA nuclease (144 aa).

This sequence belongs to the YqgF nuclease family.

The protein localises to the cytoplasm. Could be a nuclease involved in processing of the 5'-end of pre-16S rRNA. This is Putative pre-16S rRNA nuclease from Pseudomonas aeruginosa (strain LESB58).